We begin with the raw amino-acid sequence, 363 residues long: GDSL esterase/lipase At1g29670 (363 aa).

Positions 1-24 are cleaved as a signal peptide; the sequence is MESYLTKWCVVLVLLCFGFSVVKA. Serine 39 functions as the Nucleophile in the catalytic mechanism. Residues aspartate 327 and histidine 330 contribute to the active site.

The protein belongs to the 'GDSL' lipolytic enzyme family.

Its subcellular location is the secreted. The polypeptide is GDSL esterase/lipase At1g29670 (Arabidopsis thaliana (Mouse-ear cress)).